We begin with the raw amino-acid sequence, 609 residues long: Alpha-fetoprotein (609 aa).

The N-terminal stretch at 1-18 (MKWVESIFLIFLLNFTES) is a signal peptide. Albumin domains lie at 19–210 (RTLH…ATVT), 211–402 (KELR…EELQ), and 403–601 (KYIQ…KLIS). Position 22 (H22) interacts with Cu(2+). 8 disulfide bridges follow: C99-C114, C113-C124, C148-C193, C192-C201, C224-C270, C269-C277, C289-C303, and C302-C313. Residues S111, S115, and S117 each carry the phosphoserine modification. N251 carries N-linked (GlcNAc...) asparagine glycosylation. S344 is modified (phosphoserine). 7 cysteine pairs are disulfide-bonded: C384-C393, C416-C462, C461-C472, C485-C501, C500-C511, C538-C583, and C582-C591. S444 carries the phosphoserine modification.

Belongs to the ALB/AFP/VDB family. Dimeric and trimeric forms have been found in addition to the monomeric form. In terms of processing, sulfated. As to expression, plasma.

The protein localises to the secreted. Binds copper, nickel, and fatty acids as well as, and bilirubin less well than, serum albumin. The protein is Alpha-fetoprotein (AFP) of Gorilla gorilla gorilla (Western lowland gorilla).